The chain runs to 676 residues: E3 ubiquitin-protein ligase ICP0 (676 aa).

An RING-type zinc finger spans residues 13–52 (CCICLDAITGAARALPCLHAFCLACIRRWLEGRPTCPLCK). Disordered stretches follow at residues 101–153 (DLTA…GGRA), 266–517 (HLIP…AGAQ), and 555–676 (AAIS…AWRQ). Residues 123 to 153 (EAGGGAGGAEEAGEARGAGAGRAAGAAGGRA) show a composition bias toward gly residues. The segment covering 286–303 (SDSDSEGSEDDSWSESEE) has biased composition (acidic residues). The span at 304-314 (SSSGLSTSDLT) shows a compositional bias: low complexity. Over residues 315–328 (AIDDTETEPETDAE) the composition is skewed to acidic residues. A compositionally biased stretch (polar residues) spans 351–361 (YVSTRGRQTPA). Low complexity-rich tracts occupy residues 375 to 388 (GRAA…SSRS) and 397 to 411 (LPAA…QARA). Gly residues predominate over residues 422 to 439 (GAGLGVAAGETAGWGAGS). Over residues 440 to 450 (EEGRGERRARL) the composition is skewed to basic and acidic residues. Positions 474–484 (TPAPAPAPAPA) are enriched in pro residues. A compositionally biased stretch (low complexity) spans 555 to 597 (AAISTRAPTPSPAGRAPAADPRRAGAPALAGAARAEVGRNGNP).

This sequence belongs to the simplexviruses ICp0 family. Auto-ubiquitinated. Post-translationally, transactivation activity is possibly regulated through phosphorylation by casein kinase II.

It carries out the reaction S-ubiquitinyl-[E2 ubiquitin-conjugating enzyme]-L-cysteine + [acceptor protein]-L-lysine = [E2 ubiquitin-conjugating enzyme]-L-cysteine + N(6)-ubiquitinyl-[acceptor protein]-L-lysine.. Functionally, evades nuclear antiviral defenses triggered by dsDNA viruses. Acts during the initial stages of lytic infection and the reactivation of latent viral genome. Prevents the antiviral effect of nuclear bodies by degrading host PML and SP100. The protein is E3 ubiquitin-protein ligase ICP0 (BICP0) of Bovine herpesvirus 1.1 (strain Cooper) (BoHV-1).